A 583-amino-acid polypeptide reads, in one-letter code: Secretogranin-2b (583 aa).

A signal peptide spans 1-28 (MMLSLPKLSAGGVVVLLATLLHTLTVQG). Disordered stretches follow at residues 123–159 (AGES…AGFV) and 526–583 (VDNG…VAGM). Basic and acidic residues predominate over residues 534 to 546 (AKRDTQGKEEPEG).

The protein belongs to the chromogranin/secretogranin protein family.

It localises to the secreted. Functionally, neuroendocrine protein of the granin family that regulates the biogenesis of secretory granules. Required for neurovascular modeling of the hindbrain. Acts in a non-cell autonomous manner and is required for migration and proliferation of central artery endothelial cells. Required for normal courting behavior and spawning. This Danio rerio (Zebrafish) protein is Secretogranin-2b.